Consider the following 76-residue polypeptide: MSKFFRRRKFCKFTAEGVKEIDYKDLNTLRQYLTENGKIVPSRVTGTKSKYQRQLATAVKRSRFLALIPYTDNHDV.

It belongs to the bacterial ribosomal protein bS18 family. In terms of assembly, part of the 30S ribosomal subunit. Forms a tight heterodimer with protein bS6.

Binds as a heterodimer with protein bS6 to the central domain of the 16S rRNA, where it helps stabilize the platform of the 30S subunit. This chain is Small ribosomal subunit protein bS18, found in Xanthomonas campestris pv. campestris (strain 8004).